A 929-amino-acid polypeptide reads, in one-letter code: MNWNKGGPGTKRGFGFGGFAISAGKKEEAKLPQQSHSAFGAASSSSGFGKSAPPQLPSFYKIGSKRANFDEENAYFEDEEEDSSNVDLPYIPAENSPTRQQFHSKPADSDSDDDPLEAFMAEVEDQAARDMKRLEEKDKERKNVKGIRDDIEEEDDQEAYFRYMAENPTAGVVQEEEEDNLEYDSDGNPIAPSKKIIDPLPPIDHSEIDYPPFEKNFYNEHEEITNLTPQQLIDLRHKLNLRVSGAAPPRPGSSFAHFGFDEQLMHQIRKSEYTQPTPIQCQGVPVALSGRDMIGIAKTGSGKTAAFIWPMLIHIMDQKELEPGDGPIAVIVCPTRELCQQIHAECKRFGKAYNLRSVAVYGGGSMWEQAKALQEGAEIVVCTPGRLIDHVKKKATNLQRVSYLVFDEADRMFDMGFEYQVRSIASHVRPDRQTLLFSATFRKKIEKLARDILIDPIRVVQGDIGEANEDVTQIVEILHSGPSKWNWLTRRLVEFTSSGSVLLFVTKKANAEELASNLKQEGHNLGLLHGDMDQSERNKVISDFKKKDIPVLVATDVAARGLDIPSIKTVINYDVARDIDTHTHRIGRTGRAGEKGVAYTLLTPKDSNFAGDLVRNLEGANQHVSKELLDLAMQNAWFRKSRFKGGKGKKLNIGGGGLGYRERPGLGSENSDRGNNNNVMSNYEAYKPSTGAMGDRLTAMKAAFQSQYKSHFVAASLSNQKAGTSSAGASGWTSAGSLNSVPTNSAQQGHNSPDNPMTSSTKNIPGFNNSGNISSAPVTYPSIGAQGVNNTASGNNSREGIGGGNGKRERYTENRGGSRHSHGDGGNRHGDGGRHGDGYRYPESGSRHTDGHRHGETRHGGSAGRHGESRGANDGRNGESRKEGFNRENKMDPKVDSSRMDKVDSKTDKTPDGFAVPEPPKRKKSRWDS.

Lys-5 carries the N6-acetyllysine modification. The residue at position 12 (Arg-12) is an Omega-N-methylarginine. 2 disordered regions span residues 25-119 (KKEE…LEAF) and 182-203 (EYDS…LPPI). Over residues 35–52 (SHSAFGAASSSSGFGKSA) the composition is skewed to low complexity. Ser-58 bears the Phosphoserine mark. Residues 70–84 (DEENAYFEDEEEDSS) are compositionally biased toward acidic residues. Residues Ser-96, Ser-104, Ser-109, and Ser-111 each carry the phosphoserine modification. Residues 116-157 (LEAFMAEVEDQAARDMKRLEEKDKERKNVKGIRDDIEEEDDQ) adopt a coiled-coil conformation. Phosphoserine is present on Ser-185. Residues 253–281 (SSFAHFGFDEQLMHQIRKSEYTQPTPIQC) carry the Q motif motif. Positions 284-459 (VPVALSGRDM…RDILIDPIRV (176 aa)) constitute a Helicase ATP-binding domain. 297-304 (AKTGSGKT) lines the ATP pocket. The DEAD box signature appears at 407 to 410 (DEAD). The Helicase C-terminal domain occupies 487-632 (WLTRRLVEFT…HVSKELLDLA (146 aa)). Disordered stretches follow at residues 662–682 (ERPG…VMSN) and 723–929 (GTSS…RWDS). Low complexity predominate over residues 723 to 737 (GTSSAGASGWTSAGS). Polar residues-rich tracts occupy residues 738–777 (LNSV…SSAP) and 787–798 (GVNNTASGNNSR). The segment at 739-828 (NSVPTNSAQQ…RHSHGDGGNR (90 aa)) is necessary for interaction with TP53BP2. Residues 821–911 (SHGDGGNRHG…KVDSKTDKTP (91 aa)) are compositionally biased toward basic and acidic residues. Lys-894 participates in a covalent cross-link: Glycyl lysine isopeptide (Lys-Gly) (interchain with G-Cter in SUMO2).

The protein belongs to the DEAD box helicase family. DDX42 subfamily. As to quaternary structure, transient component of the SF3B subcomplex of the 17S U2 SnRNP complex. Interacts (via the C-terminus) with TP53BP2; the interaction is not inhibitied by TP53BP2 ubiquitination and is independent of p53/TP53.

The protein resides in the cytoplasm. It localises to the nucleus. It carries out the reaction ATP + H2O = ADP + phosphate + H(+). Its function is as follows. ATP-dependent RNA helicase that binds to partially double-stranded RNAs (dsRNAs) in order to unwind RNA secondary structures. Unwinding is promoted in the presence of single-strand binding proteins. Also mediates RNA duplex formation thereby displacing the single-strand RNA binding protein. ATP and ADP modulate its activity: ATP binding and hydrolysis by DDX42 triggers RNA strand separation, whereas the ADP-bound form of the protein triggers annealing of complementary RNA strands. Required for assembly of the 17S U2 SnRNP complex of the spliceosome, a large ribonucleoprotein complex that removes introns from transcribed pre-mRNAs: DDX42 associates transiently with the SF3B subcomplex of the 17S U2 SnRNP complex and is released after fulfilling its role in the assembly of 17S U2 SnRNP. Involved in the survival of cells by interacting with TP53BP2 and thereby counteracting the apoptosis-stimulating activity of TP53BP2. Relocalizes TP53BP2 to the cytoplasm. The sequence is that of ATP-dependent RNA helicase DDX42 (Ddx42) from Mus musculus (Mouse).